Reading from the N-terminus, the 996-residue chain is Alanine--tRNA ligase, chloroplastic/mitochondrial (996 aa).

Zn(2+)-binding residues include histidine 677, histidine 681, cysteine 779, and histidine 783.

It belongs to the class-II aminoacyl-tRNA synthetase family. In terms of assembly, monomer. Zn(2+) serves as cofactor.

The protein localises to the plastid. It is found in the chloroplast. It localises to the mitochondrion. It catalyses the reaction tRNA(Ala) + L-alanine + ATP = L-alanyl-tRNA(Ala) + AMP + diphosphate. Its function is as follows. Catalyzes the attachment of alanine to tRNA(Ala) in a two-step reaction: alanine is first activated by ATP to form Ala-AMP and then transferred to the acceptor end of tRNA(Ala). Also edits incorrectly charged tRNA(Ala) via its editing domain. The chain is Alanine--tRNA ligase, chloroplastic/mitochondrial from Oryza sativa subsp. indica (Rice).